The chain runs to 567 residues: MKQSKVFIPTMRDVPSEAEAQSHRLLLKSGLIKQSTSGIYSYLPLATRVLNNITAIVRQEMERIDSVEILMPALQQAELWEESGRWGAYGPELMRLQDRHGRQFALGPTHEELVTSIVRNELKSYKQLPMTLFQIQSKFRDEKRPRFGLLRGREFIMKDAYSFHADEASLDQTYQDMYQAYSRIFERVGINARPVVADSGAIGGSHTHEFMALSAIGEDTIVYSKESDYAANIEKAEVVYEPNHKHTTVQPLEKIETPNVKTAQELADFLGRPVDEIVKTMIFKVDGEYIMVLVRGHHEINDIKLKSYFGTDNIELATQDEIVNLVGANPGSLGPVIDKEIKIYADNFVQDLNNLVVGANEDGYHLINVNVGRDFNVDEYGDFRFILEGEKLSDGSGAAHFAEGIEVGQVFKLGTKYSESMNATFLDNQGKAQSLIMGCYGIGISRTLSAIVEQNHDDNGIVWPKSVTPFDLHLISINPKKDDQRELADALYAEFNTKFDVLYDDRQERAGVKFNDADLIGLPLRIVVGKRASEGIVEVKERLTGDSEEVHIDDLMTVITNKYDNLK.

It belongs to the class-II aminoacyl-tRNA synthetase family. ProS type 1 subfamily. Homodimer.

It is found in the cytoplasm. The enzyme catalyses tRNA(Pro) + L-proline + ATP = L-prolyl-tRNA(Pro) + AMP + diphosphate. Its function is as follows. Catalyzes the attachment of proline to tRNA(Pro) in a two-step reaction: proline is first activated by ATP to form Pro-AMP and then transferred to the acceptor end of tRNA(Pro). As ProRS can inadvertently accommodate and process non-cognate amino acids such as alanine and cysteine, to avoid such errors it has two additional distinct editing activities against alanine. One activity is designated as 'pretransfer' editing and involves the tRNA(Pro)-independent hydrolysis of activated Ala-AMP. The other activity is designated 'posttransfer' editing and involves deacylation of mischarged Ala-tRNA(Pro). The misacylated Cys-tRNA(Pro) is not edited by ProRS. The polypeptide is Proline--tRNA ligase (Staphylococcus aureus (strain COL)).